Here is a 327-residue protein sequence, read N- to C-terminus: Zinc finger protein 444 (327 aa).

M1 carries the post-translational modification N-acetylmethionine. Residue K8 forms a Glycyl lysine isopeptide (Lys-Gly) (interchain with G-Cter in SUMO2) linkage. Phosphoserine is present on residues S18 and S104. The SCAN box domain maps to W20–S104. The interval P101 to A171 is disordered. Polar residues predominate over residues D106–T118. Over residues P134–G148 the composition is skewed to low complexity. 2 C2H2-type zinc fingers span residues T179–H201 and H207–H229. K190 participates in a covalent cross-link: Glycyl lysine isopeptide (Lys-Gly) (interchain with G-Cter in SUMO2). A disordered region spans residues E220–L243. Position 235 is a phosphoserine (S235). C2H2-type zinc fingers lie at residues H250 to H272 and F278 to H300. The span at A305 to G314 shows a compositional bias: low complexity. The tract at residues A305–G327 is disordered.

It belongs to the krueppel C2H2-type zinc-finger protein family.

The protein resides in the nucleus. Its function is as follows. Transcriptional regulator. Binds to the 5'-flanking critical region of the SCARF1 promoter. The polypeptide is Zinc finger protein 444 (ZNF444) (Homo sapiens (Human)).